The primary structure comprises 419 residues: Arginine biosynthesis bifunctional protein ArgJ 1, mitochondrial (419 aa).

Substrate is bound by residues K177, T188, E275, N414, and T419. T188 (nucleophile) is an active-site residue.

The protein belongs to the ArgJ family. As to quaternary structure, heterodimer of an alpha and a beta chain. In terms of processing, the alpha and beta chains are autoproteolytically processed from a single precursor protein within the mitochondrion.

The protein resides in the mitochondrion matrix. It carries out the reaction N(2)-acetyl-L-ornithine + L-glutamate = N-acetyl-L-glutamate + L-ornithine. The catalysed reaction is L-glutamate + acetyl-CoA = N-acetyl-L-glutamate + CoA + H(+). It participates in amino-acid biosynthesis; L-arginine biosynthesis; L-ornithine and N-acetyl-L-glutamate from L-glutamate and N(2)-acetyl-L-ornithine (cyclic): step 1/1. Its pathway is amino-acid biosynthesis; L-arginine biosynthesis; N(2)-acetyl-L-ornithine from L-glutamate: step 1/4. In terms of biological role, catalyzes two activities which are involved in the cyclic version of arginine biosynthesis: the synthesis of acetylglutamate from glutamate and acetyl-CoA, and of ornithine by transacetylation between acetylornithine and glutamate. This chain is Arginine biosynthesis bifunctional protein ArgJ 1, mitochondrial, found in Sclerotinia sclerotiorum (strain ATCC 18683 / 1980 / Ss-1) (White mold).